Consider the following 151-residue polypeptide: Class I hydrophobin A (151 aa).

The N-terminal stretch at 1–17 (MQFSVAAVLALATAVAA) is a signal peptide. 4 cysteine pairs are disulfide-bonded: Cys-52-Cys-125, Cys-60-Cys-119, Cys-61-Cys-101, and Cys-126-Cys-144.

The protein belongs to the fungal hydrophobin family. Interacts with cutinase cutL1 in a pH-dependent manner. Self-assembles to form functional amyloid fibrils called rodlets. Self-assembly into fibrillar rodlets occurs spontaneously at hydrophobic:hydrophilic interfaces and the rodlets further associate laterally to form amphipathic monolayers. rolA rodlet formation is regulated by the strength of ionic interactions between rolA molecules. Three types of self-assembled structures of rolA are observed: spherical, rod-like, and mesh-like.

Its subcellular location is the secreted. It localises to the cell wall. Functionally, aerial growth, conidiation, and dispersal of filamentous fungi in the environment rely upon a capability of their secreting small amphipathic proteins called hydrophobins (HPBs) with low sequence identity. Class I can self-assemble into an outermost layer of rodlet bundles on aerial cell surfaces, conferring cellular hydrophobicity that supports fungal growth, development and dispersal; whereas Class II form highly ordered films at water-air interfaces through intermolecular interactions but contribute nothing to the rodlet structure. RolA is a class I hydrophobin that undergoes a conformational change after its adsorption to hydrophobic surfaces such as the biodegradable polyester polybutylene succinate-coadipate (PBSA) and recruits the cutinase cutL1, resulting in condensation of cutL1 on the PBSA surface and consequent stimulation of PBSA hydrolysis. Increases also the activity of polyethylene terephthalate hydrolase (PETase) that hydrolyzes polyethylene terephthalate (PET), one of the most well-known polyesters that is widely used as packaging material, when the PET samples are preincubated with the hydrophobin. The wetting effect of rolA probably acts on PET surface to become hydrophilic, which leads PETase easier to contact and attack the surface. This chain is Class I hydrophobin A, found in Aspergillus oryzae (strain ATCC 42149 / RIB 40) (Yellow koji mold).